The chain runs to 283 residues: Glutamate racemase (283 aa).

Residues 28–29 and 60–61 each bind substrate; these read DS and YG. Residue C92 is the Proton donor/acceptor of the active site. 93–94 is a substrate binding site; sequence NT. The active-site Proton donor/acceptor is C204. 205 to 206 is a binding site for substrate; sequence TH.

The protein belongs to the aspartate/glutamate racemases family.

It catalyses the reaction L-glutamate = D-glutamate. Its pathway is cell wall biogenesis; peptidoglycan biosynthesis. In terms of biological role, provides the (R)-glutamate required for cell wall biosynthesis. This Salmonella choleraesuis (strain SC-B67) protein is Glutamate racemase.